A 272-amino-acid polypeptide reads, in one-letter code: Pantothenate synthetase (272 aa).

Met27–His34 contributes to the ATP binding site. Catalysis depends on His34, which acts as the Proton donor. A (R)-pantoate-binding site is contributed by Gln58. Residue Gln58 coordinates beta-alanine. Residue Gly143 to Asp146 participates in ATP binding. Position 149 (Gln149) interacts with (R)-pantoate. ATP-binding positions include Val172 and Leu180–Arg183.

Belongs to the pantothenate synthetase family. In terms of assembly, homodimer.

The protein resides in the cytoplasm. It carries out the reaction (R)-pantoate + beta-alanine + ATP = (R)-pantothenate + AMP + diphosphate + H(+). It participates in cofactor biosynthesis; (R)-pantothenate biosynthesis; (R)-pantothenate from (R)-pantoate and beta-alanine: step 1/1. Catalyzes the condensation of pantoate with beta-alanine in an ATP-dependent reaction via a pantoyl-adenylate intermediate. The polypeptide is Pantothenate synthetase (Aliarcobacter butzleri (strain RM4018) (Arcobacter butzleri)).